Consider the following 176-residue polypeptide: Translation initiation factor IF-3 (176 aa).

The protein belongs to the IF-3 family. As to quaternary structure, monomer.

Its subcellular location is the cytoplasm. Functionally, IF-3 binds to the 30S ribosomal subunit and shifts the equilibrium between 70S ribosomes and their 50S and 30S subunits in favor of the free subunits, thus enhancing the availability of 30S subunits on which protein synthesis initiation begins. This Streptococcus mutans serotype c (strain ATCC 700610 / UA159) protein is Translation initiation factor IF-3.